The sequence spans 381 residues: Alkanesulfonate monooxygenase (381 aa).

The protein belongs to the SsuD family. In terms of assembly, homotetramer.

The catalysed reaction is an alkanesulfonate + FMNH2 + O2 = an aldehyde + FMN + sulfite + H2O + 2 H(+). In terms of biological role, catalyzes the desulfonation of aliphatic sulfonates. The polypeptide is Alkanesulfonate monooxygenase (Escherichia coli O6:K15:H31 (strain 536 / UPEC)).